The primary structure comprises 819 residues: Lysine-specific demethylase JMJ18 (819 aa).

The interval 1–39 is disordered; the sequence is MENPPLESEIKEDMSLKNHPPDKDKDKDTIMEQPSSPRH. Positions 8-30 are enriched in basic and acidic residues; the sequence is SEIKEDMSLKNHPPDKDKDKDTI. Positions 59-100 constitute a JmjN domain; it reads APVFTPSLEEFVDPLAYIEKIRPLAEPYGICRIIPPSTWKPP. Positions 120-171 are disordered; that stretch reads TVDLLQNREPMKKKPKSRKRKRRRNSRMGSSKRRSGSSPAESTSSPEAEEKF. Residues 130 to 137 carry the Nuclear localization signal motif; sequence MKKKPKSR. The segment covering 130-154 has biased composition (basic residues); sequence MKKKPKSRKRKRRRNSRMGSSKRRS. A compositionally biased stretch (low complexity) spans 155 to 165; it reads GSSPAESTSSP. A JmjC domain is found at 261 to 427; sequence QYTLSGWNLN…HGQNAVELYS (167 aa). His-307, Glu-309, and His-395 together coordinate Fe cation. Zn(2+)-binding residues include Cys-519, Cys-522, Cys-533, Cys-535, Cys-542, His-545, Cys-550, and Cys-552. The C5HC2 zinc finger occupies 519–571; it reads CFSCFYDLHLSASGCKCSPEEYACLKHADDLCSCDVKDGFILLRYTMDELSSL. In terms of domain architecture, FYR N-terminal spans 644-702; it reads ASENLGVSVEPINLGFLIFGKLWCNKYAIFPKGFRSRVKFYNVLDPTRMSNYISEVLDA. An FYR C-terminal domain is found at 704–788; it reads LMGPLFRVTL…HRLVEYWNHK (85 aa).

Belongs to the JARID1 histone demethylase family. Requires Fe(2+) as cofactor. In terms of tissue distribution, expressed in vascular tissues of roots, cotyledons, leaves and flowers. Expressed predominantly in phloem companion cells of roots. Present in inflorescences, roots, siliques, leaves and stems.

The protein localises to the nucleus. It catalyses the reaction N(6),N(6),N(6)-trimethyl-L-lysyl(4)-[histone H3] + 2-oxoglutarate + O2 = N(6),N(6)-dimethyl-L-lysyl(4)-[histone H3] + formaldehyde + succinate + CO2. The enzyme catalyses N(6),N(6)-dimethyl-L-lysyl(4)-[histone H3] + 2-oxoglutarate + O2 = N(6)-methyl-L-lysyl(4)-[histone H3] + formaldehyde + succinate + CO2. Histone demethylase that demethylates 'Lys-4' (H3K4me) of histone H3 with a specific activity for H3K4me3 and H3K4me2. No activity on H3K9me3/2, H3K27me3/2 and H3K36me3/2. Involved in the control of flowering time by demethylating H3K4me3 at the FLC locus and repressing its expression. The repression of FLC level and reduction in H3K4me3 at the FLC locus results in induction of the flowering activator FT, which is a downstream target of FLC. The protein is Lysine-specific demethylase JMJ18 of Arabidopsis thaliana (Mouse-ear cress).